The sequence spans 232 residues: Protein FAM246A (232 aa).

Disordered stretches follow at residues 1-47 (MATP…RAPG), 153-178 (LPPPPPSPPARREPRAVPRATPRGPT), and 191-232 (AASR…GGGD). Residues 19–31 (EVLRRVTGRRRDP) show a composition bias toward basic and acidic residues. Over residues 211 to 220 (APVRKNHKKM) the composition is skewed to basic residues.

This sequence belongs to the FAM246 family.

This is Protein FAM246A from Homo sapiens (Human).